Consider the following 128-residue polypeptide: Large ribosomal subunit protein bL12 (128 aa).

The protein belongs to the bacterial ribosomal protein bL12 family. As to quaternary structure, homodimer. Part of the ribosomal stalk of the 50S ribosomal subunit. Forms a multimeric L10(L12)X complex, where L10 forms an elongated spine to which 2 to 4 L12 dimers bind in a sequential fashion. Binds GTP-bound translation factors.

Forms part of the ribosomal stalk which helps the ribosome interact with GTP-bound translation factors. Is thus essential for accurate translation. This Thermotoga petrophila (strain ATCC BAA-488 / DSM 13995 / JCM 10881 / RKU-1) protein is Large ribosomal subunit protein bL12.